A 591-amino-acid polypeptide reads, in one-letter code: Probable metalloprotease ARX1 (591 aa).

It belongs to the peptidase M24 family. In terms of assembly, component of the nucleoplasmic and cytoplasmic pre-60S ribosomal particles.

The protein localises to the cytoplasm. The protein resides in the nucleus. In terms of biological role, probable metalloprotease involved in proper assembly of pre-ribosomal particles during the biogenesis of the 60S ribosomal subunit. Accompanies the pre-60S particles to the cytoplasm. This chain is Probable metalloprotease ARX1 (ARX1), found in Eremothecium gossypii (strain ATCC 10895 / CBS 109.51 / FGSC 9923 / NRRL Y-1056) (Yeast).